A 651-amino-acid polypeptide reads, in one-letter code: Acid beta-fructofuranosidase (651 aa).

The Cytoplasmic segment spans residues 1–23 (MEHHKPLLPTSSHAAPNPRTRKD). Residues 1–103 (MEHHKPLLPT…LFSGEGGASE (103 aa)) constitute a propeptide, removed in mature form. The helical; Signal-anchor for type II membrane protein transmembrane segment at 24-44 (LLLLLCALLFLSSLVAFGRNR) threads the bilayer. At 45–651 (ASNVPHDHVS…PFPFNPDQKN (607 aa)) the chain is on the lumenal side. A disordered region spans residues 48–76 (VPHDHVSSSASNHQQEHQSPTSLPSSKWH). A compositionally biased stretch (polar residues) spans 54–72 (SSSASNHQQEHQSPTSLPS). Residues 127–130 (WMND), Gln146, Trp154, and 189–190 (WT) contribute to the substrate site. Residue Asp130 is part of the active site. Asn210 is a glycosylation site (N-linked (GlcNAc...) asparagine). 253–254 (RD) contributes to the substrate binding site. The N-linked (GlcNAc...) asparagine glycan is linked to Asn275. 2 residues coordinate substrate: Glu308 and Asp343. An intrachain disulfide couples Cys500 to Cys548. The N-linked (GlcNAc...) asparagine glycan is linked to Asn620.

Belongs to the glycosyl hydrolase 32 family. As to quaternary structure, may be present in two forms, a 70 kDa monomer and a heterodimer of the 30 kDa and 38 kDa subunits. The ratio of the levels of the two forms within cells appears to be regulated developmentally.

Its subcellular location is the membrane. The protein resides in the vacuole lumen. The catalysed reaction is Hydrolysis of terminal non-reducing beta-D-fructofuranoside residues in beta-D-fructofuranosides.. It participates in glycan biosynthesis; sucrose metabolism. In Phaseolus vulgaris (Kidney bean), this protein is Acid beta-fructofuranosidase.